Reading from the N-terminus, the 219-residue chain is Thiamine-phosphate synthase (219 aa).

4-amino-2-methyl-5-(diphosphooxymethyl)pyrimidine contacts are provided by residues 44–48 (QFREK) and N79. D80 and D99 together coordinate Mg(2+). S117 serves as a coordination point for 4-amino-2-methyl-5-(diphosphooxymethyl)pyrimidine. Residue 143-145 (TST) participates in 2-[(2R,5Z)-2-carboxy-4-methylthiazol-5(2H)-ylidene]ethyl phosphate binding. K146 contacts 4-amino-2-methyl-5-(diphosphooxymethyl)pyrimidine. 2-[(2R,5Z)-2-carboxy-4-methylthiazol-5(2H)-ylidene]ethyl phosphate-binding positions include G175 and 195-196 (IS).

Belongs to the thiamine-phosphate synthase family. Mg(2+) is required as a cofactor.

It catalyses the reaction 2-[(2R,5Z)-2-carboxy-4-methylthiazol-5(2H)-ylidene]ethyl phosphate + 4-amino-2-methyl-5-(diphosphooxymethyl)pyrimidine + 2 H(+) = thiamine phosphate + CO2 + diphosphate. The catalysed reaction is 2-(2-carboxy-4-methylthiazol-5-yl)ethyl phosphate + 4-amino-2-methyl-5-(diphosphooxymethyl)pyrimidine + 2 H(+) = thiamine phosphate + CO2 + diphosphate. The enzyme catalyses 4-methyl-5-(2-phosphooxyethyl)-thiazole + 4-amino-2-methyl-5-(diphosphooxymethyl)pyrimidine + H(+) = thiamine phosphate + diphosphate. It functions in the pathway cofactor biosynthesis; thiamine diphosphate biosynthesis; thiamine phosphate from 4-amino-2-methyl-5-diphosphomethylpyrimidine and 4-methyl-5-(2-phosphoethyl)-thiazole: step 1/1. Functionally, condenses 4-methyl-5-(beta-hydroxyethyl)thiazole monophosphate (THZ-P) and 2-methyl-4-amino-5-hydroxymethyl pyrimidine pyrophosphate (HMP-PP) to form thiamine monophosphate (TMP). This chain is Thiamine-phosphate synthase, found in Bacillus cereus (strain AH820).